The following is a 522-amino-acid chain: N-acetylgalactosamine-6-sulfatase (522 aa).

The signal sequence occupies residues 1–25 (MAAVAAATRWHLLLVLSAAGLGVTG). The interval 27 to 379 (PQPPNILLLL…PAMLQGRLTE (353 aa)) is catalytic domain. 3 residues coordinate Ca(2+): Asp38, Asp39, and Cys78. Cys78 functions as the Nucleophile in the catalytic mechanism. 3-oxoalanine (Cys) is present on Cys78. The active site involves His141. N-linked (GlcNAc...) asparagine glycosylation occurs at Asn203. Ca(2+) is bound by residues Asp288 and Asn289. Residues Cys308 and Cys419 are joined by a disulfide bond. Asn423 is a glycosylation site (N-linked (GlcNAc...) asparagine). 2 cysteine pairs are disulfide-bonded: Cys489–Cys518 and Cys501–Cys507.

It belongs to the sulfatase family. As to quaternary structure, homodimer. Ca(2+) is required as a cofactor. The conversion to 3-oxoalanine (also known as C-formylglycine, FGly), of a serine or cysteine residue in prokaryotes and of a cysteine residue in eukaryotes, is critical for catalytic activity.

It localises to the lysosome. It catalyses the reaction Hydrolysis of the 6-sulfate groups of the N-acetyl-D-galactosamine 6-sulfate units of chondroitin sulfate and of the D-galactose 6-sulfate units of keratan sulfate.. The sequence is that of N-acetylgalactosamine-6-sulfatase (GALNS) from Sus scrofa (Pig).